Consider the following 222-residue polypeptide: Transmembrane protein 114 (222 aa).

A helical transmembrane segment spans residues 7–27; the sequence is ALAGAAALSGALSFVLLAAAI. N-linked (GlcNAc...) asparagine glycans are attached at residues Asn54 and Asn88. The next 3 membrane-spanning stretches (helical) occupy residues 105–125, 133–153, and 188–208; these read FVIL…TGFL, LLLL…LTGI, and LALG…FLAA.

It is found in the cell junction. Its subcellular location is the tight junction. It localises to the lateral cell membrane. The protein localises to the apical cell membrane. The sequence is that of Transmembrane protein 114 from Mus musculus (Mouse).